Reading from the N-terminus, the 549-residue chain is Polynucleotide 5'-hydroxyl-kinase nol-9 (549 aa).

190–197 lines the ATP pocket; sequence GHKGAGKS.

Belongs to the Clp1 family. NOL9/GRC3 subfamily.

It localises to the nucleus. The protein resides in the nucleolus. In terms of biological role, polynucleotide 5'-kinase involved in rRNA processing. The sequence is that of Polynucleotide 5'-hydroxyl-kinase nol-9 (nol-9) from Caenorhabditis elegans.